A 388-amino-acid polypeptide reads, in one-letter code: Acyl-CoA dehydrogenase fadE12 (388 aa).

This sequence belongs to the acyl-CoA dehydrogenase family. It depends on FAD as a cofactor.

It catalyses the reaction a 2,3-saturated acyl-CoA + A = a 2,3-dehydroacyl-CoA + AH2. The protein is Acyl-CoA dehydrogenase fadE12 (fadE12) of Mycobacterium bovis (strain ATCC BAA-935 / AF2122/97).